The following is a 370-amino-acid chain: Probable neutral protease 2 homolog ARB_03949 (370 aa).

The N-terminal stretch at 1-19 is a signal peptide; it reads MQLVAALAALGALVAPAVA. Residues 20–188 constitute a propeptide that is removed on maturation; the sequence is YPHAPMNETL…SIHSRALQKR (169 aa). 2 disulfides stabilise this stretch: cysteine 196/cysteine 267 and cysteine 274/cysteine 292. Histidine 316 contributes to the Zn(2+) binding site. The active site involves glutamate 317. Zn(2+) is bound by residues histidine 320 and aspartate 331.

It belongs to the peptidase M35 family. Zn(2+) is required as a cofactor.

It is found in the secreted. It catalyses the reaction Preferential cleavage of bonds with hydrophobic residues in P1'. Also 3-Asn-|-Gln-4 and 8-Gly-|-Ser-9 bonds in insulin B chain.. Probable secreted metalloprotease that shows high activities on basic nuclear substrates such as histone and protamine. May be involved in virulence. In Arthroderma benhamiae (strain ATCC MYA-4681 / CBS 112371) (Trichophyton mentagrophytes), this protein is Probable neutral protease 2 homolog ARB_03949.